The primary structure comprises 157 residues: 2-C-methyl-D-erythritol 2,4-cyclodiphosphate synthase (157 aa).

A divalent metal cation contacts are provided by aspartate 8 and histidine 10. Residues 8–10 and 34–35 contribute to the 4-CDP-2-C-methyl-D-erythritol 2-phosphate site; these read DVH and HS. An a divalent metal cation-binding site is contributed by histidine 42. 4-CDP-2-C-methyl-D-erythritol 2-phosphate-binding positions include 56-58, 61-65, 100-106, 132-135, phenylalanine 139, and arginine 142; these read DIG, FPDTD, AQAPKMA, and TTTE.

This sequence belongs to the IspF family. As to quaternary structure, homotrimer. A divalent metal cation serves as cofactor.

It catalyses the reaction 4-CDP-2-C-methyl-D-erythritol 2-phosphate = 2-C-methyl-D-erythritol 2,4-cyclic diphosphate + CMP. It functions in the pathway isoprenoid biosynthesis; isopentenyl diphosphate biosynthesis via DXP pathway; isopentenyl diphosphate from 1-deoxy-D-xylulose 5-phosphate: step 4/6. Involved in the biosynthesis of isopentenyl diphosphate (IPP) and dimethylallyl diphosphate (DMAPP), two major building blocks of isoprenoid compounds. Catalyzes the conversion of 4-diphosphocytidyl-2-C-methyl-D-erythritol 2-phosphate (CDP-ME2P) to 2-C-methyl-D-erythritol 2,4-cyclodiphosphate (ME-CPP) with a corresponding release of cytidine 5-monophosphate (CMP). The polypeptide is 2-C-methyl-D-erythritol 2,4-cyclodiphosphate synthase (Pseudomonas syringae pv. tomato (strain ATCC BAA-871 / DC3000)).